The following is a 443-amino-acid chain: Tubulin beta-1/beta-2 chain (443 aa).

GTP contacts are provided by glutamine 11, glutamate 69, serine 138, glycine 142, threonine 143, glycine 144, asparagine 204, and asparagine 226. Glutamate 69 lines the Mg(2+) pocket. Positions 424-443 (QYQDASAEEEGEFEGEEEEA) are disordered. Acidic residues predominate over residues 429–443 (SAEEEGEFEGEEEEA).

It belongs to the tubulin family. In terms of assembly, dimer of alpha and beta chains. A typical microtubule is a hollow water-filled tube with an outer diameter of 25 nm and an inner diameter of 15 nM. Alpha-beta heterodimers associate head-to-tail to form protofilaments running lengthwise along the microtubule wall with the beta-tubulin subunit facing the microtubule plus end conferring a structural polarity. Microtubules usually have 13 protofilaments but different protofilament numbers can be found in some organisms and specialized cells. Mg(2+) serves as cofactor.

Its subcellular location is the cytoplasm. The protein localises to the cytoskeleton. In terms of biological role, tubulin is the major constituent of microtubules, a cylinder consisting of laterally associated linear protofilaments composed of alpha- and beta-tubulin heterodimers. Microtubules grow by the addition of GTP-tubulin dimers to the microtubule end, where a stabilizing cap forms. Below the cap, tubulin dimers are in GDP-bound state, owing to GTPase activity of alpha-tubulin. This is Tubulin beta-1/beta-2 chain (TUBB1) from Chlamydomonas reinhardtii (Chlamydomonas smithii).